A 1011-amino-acid chain; its full sequence is Probable calcium-transporting ATPase (1011 aa).

Residues 1-65 lie on the Cytoplasmic side of the membrane; the sequence is MLPENLPTDP…WKLVLAQFED (65 aa). A helical membrane pass occupies residues 66 to 84; that stretch reads TLVRILLLAATVSFAMAVV. Residues 85 to 90 are Extracellular-facing; that stretch reads ENNAAD. Residues 91–110 traverse the membrane as a helical segment; sequence FVEPFIILLILILNATVGVW. The Cytoplasmic segment spans residues 111-258; it reads QENRAEGAIE…QVKLDEFGVL (148 aa). The helical transmembrane segment at 259–278 threads the bilayer; the sequence is LSKVIGYICLVVFAVNLVRW. The Extracellular portion of the chain corresponds to 279–303; that stretch reads YATHKPTKNETFFTRYIQPSVHCLK. The chain crosses the membrane as a helical span at residues 304 to 321; it reads VAVALAVAAIPEGLPAVV. The Cytoplasmic segment spans residues 322–770; the sequence is TTCLALGTRR…RYLISSNIGE (449 aa). The active-site 4-aspartylphosphate intermediate is the Asp357. An ATP-binding site is contributed by Lys514. The chain crosses the membrane as a helical span at residues 771 to 794; the sequence is VVCILVTGLFGLPEALSPVQLLWV. Over 795–835 the chain is Extracellular; the sequence is NLVTDGLPATALGFNAPDRDIMEQRPRRMEEPIVNGWLFMR. A helical membrane pass occupies residues 836-856; sequence YMVIGVYVGLATVGGFLWWFL. Residues 857-885 are Cytoplasmic-facing; sequence RHGFSWHDLTTYTACSDMTNGTCLLLANP. A helical membrane pass occupies residues 886-905; sequence QTARAIALSILVVVEMLNAL. Over 906–922 the chain is Extracellular; the sequence is NALSENASLIVSRPSSN. The helical transmembrane segment at 923–942 threads the bilayer; that stretch reads VWLLFAIFSSLSLHLIIMYV. Residues 943 to 1011 are Cytoplasmic-facing; it reads PFFAKLFNIV…MEKAQEKKKD (69 aa).

It belongs to the cation transport ATPase (P-type) (TC 3.A.3) family.

It is found in the flagellar pocket. It localises to the cell membrane. The enzyme catalyses Ca(2+)(in) + ATP + H2O = Ca(2+)(out) + ADP + phosphate + H(+). This magnesium-dependent enzyme catalyzes the hydrolysis of ATP coupled with the transport of the calcium. This is Probable calcium-transporting ATPase (TBA1) from Trypanosoma brucei brucei.